Reading from the N-terminus, the 61-residue chain is uncharacterized protein (61 aa).

The interval Thr38–Gln61 is disordered.

This is an uncharacterized protein from Homo sapiens (Human).